The sequence spans 166 residues: Prorelaxin H2 (166 aa).

Positions 1 to 5 are cleaved as a signal peptide; that stretch reads SRAVA. 3 disulfide bridges follow: cysteine 16–cysteine 153, cysteine 28–cysteine 166, and cysteine 152–cysteine 157. A propeptide spans 37–138 (connecting peptide); it reads SLSQEDAPQT…LKYLGLDTHS (102 aa).

It belongs to the insulin family. Heterodimer of a B chain and an A chain linked by two disulfide bonds. In terms of tissue distribution, expressed in the corpus luteum of pregnancy and in the placenta.

It is found in the secreted. Its function is as follows. Relaxin is an ovarian hormone that acts with estrogen to produce dilatation of the birth canal in many mammals. May be involved in remodeling of connective tissues during pregnancy, promoting growth of pubic ligaments and ripening of the cervix. The sequence is that of Prorelaxin H2 (RNL2) from Pan troglodytes (Chimpanzee).